Reading from the N-terminus, the 295-residue chain is 33 kDa chaperonin (295 aa).

Intrachain disulfides connect Cys238/Cys240 and Cys271/Cys274.

The protein belongs to the HSP33 family. Under oxidizing conditions two disulfide bonds are formed involving the reactive cysteines. Under reducing conditions zinc is bound to the reactive cysteines and the protein is inactive.

Its subcellular location is the cytoplasm. In terms of biological role, redox regulated molecular chaperone. Protects both thermally unfolding and oxidatively damaged proteins from irreversible aggregation. Plays an important role in the bacterial defense system toward oxidative stress. The sequence is that of 33 kDa chaperonin from Levilactobacillus brevis (strain ATCC 367 / BCRC 12310 / CIP 105137 / JCM 1170 / LMG 11437 / NCIMB 947 / NCTC 947) (Lactobacillus brevis).